Reading from the N-terminus, the 230-residue chain is Dephospho-CoA kinase (230 aa).

The DPCK domain occupies 3–225 (IIGLTGGIAT…REGGAICPTP (223 aa)). An ATP-binding site is contributed by 11 to 16 (ATGKST).

It belongs to the CoaE family.

The protein localises to the cytoplasm. It catalyses the reaction 3'-dephospho-CoA + ATP = ADP + CoA + H(+). Its pathway is cofactor biosynthesis; coenzyme A biosynthesis; CoA from (R)-pantothenate: step 5/5. In terms of biological role, catalyzes the phosphorylation of the 3'-hydroxyl group of dephosphocoenzyme A to form coenzyme A. The polypeptide is Dephospho-CoA kinase (Synechococcus sp. (strain JA-3-3Ab) (Cyanobacteria bacterium Yellowstone A-Prime)).